We begin with the raw amino-acid sequence, 325 residues long: tRNA N6-adenosine threonylcarbamoyltransferase (325 aa).

The Fe cation site is built by His-111 and His-115. Substrate contacts are provided by residues 134–138, Asp-167, Gly-180, Asp-184, and Asn-284; that span reads LVSGG. Asp-312 serves as a coordination point for Fe cation.

Belongs to the KAE1 / TsaD family. Requires Fe(2+) as cofactor.

It is found in the cytoplasm. It catalyses the reaction L-threonylcarbamoyladenylate + adenosine(37) in tRNA = N(6)-L-threonylcarbamoyladenosine(37) in tRNA + AMP + H(+). In terms of biological role, required for the formation of a threonylcarbamoyl group on adenosine at position 37 (t(6)A37) in tRNAs that read codons beginning with adenine. Is involved in the transfer of the threonylcarbamoyl moiety of threonylcarbamoyl-AMP (TC-AMP) to the N6 group of A37, together with TsaE and TsaB. TsaD likely plays a direct catalytic role in this reaction. This chain is tRNA N6-adenosine threonylcarbamoyltransferase, found in Trichodesmium erythraeum (strain IMS101).